The primary structure comprises 164 residues: S-ribosylhomocysteine lyase (164 aa).

3 residues coordinate Fe cation: His-54, His-58, and Cys-128.

The protein belongs to the LuxS family. As to quaternary structure, homodimer. It depends on Fe cation as a cofactor.

The catalysed reaction is S-(5-deoxy-D-ribos-5-yl)-L-homocysteine = (S)-4,5-dihydroxypentane-2,3-dione + L-homocysteine. Involved in the synthesis of autoinducer 2 (AI-2) which is secreted by bacteria and is used to communicate both the cell density and the metabolic potential of the environment. The regulation of gene expression in response to changes in cell density is called quorum sensing. Catalyzes the transformation of S-ribosylhomocysteine (RHC) to homocysteine (HC) and 4,5-dihydroxy-2,3-pentadione (DPD). The chain is S-ribosylhomocysteine lyase from Campylobacter jejuni subsp. jejuni serotype O:23/36 (strain 81-176).